The following is a 427-amino-acid chain: 3-phosphoshikimate 1-carboxyvinyltransferase (427 aa).

Residues Lys20, Ser21, and Arg25 each coordinate 3-phosphoshikimate. Lys20 provides a ligand contact to phosphoenolpyruvate. Residues Gly90 and Arg118 each coordinate phosphoenolpyruvate. Residues Ser163, Ser164, Gln165, Ser191, Asp309, and Lys336 each contribute to the 3-phosphoshikimate site. Gln165 contributes to the phosphoenolpyruvate binding site. The active-site Proton acceptor is the Asp309. Phosphoenolpyruvate is bound by residues Arg340 and Arg381.

The protein belongs to the EPSP synthase family. Monomer.

It localises to the cytoplasm. It catalyses the reaction 3-phosphoshikimate + phosphoenolpyruvate = 5-O-(1-carboxyvinyl)-3-phosphoshikimate + phosphate. It participates in metabolic intermediate biosynthesis; chorismate biosynthesis. Catalyzes the transfer of the enolpyruvyl moiety of phosphoenolpyruvate (PEP) to the 5-hydroxyl of shikimate-3-phosphate (S3P) to produce enolpyruvyl shikimate-3-phosphate and inorganic phosphate. In Methanococcoides burtonii (strain DSM 6242 / NBRC 107633 / OCM 468 / ACE-M), this protein is 3-phosphoshikimate 1-carboxyvinyltransferase.